The sequence spans 216 residues: Gas vesicle protein H (216 aa).

Positions methionine 1–aspartate 141 are disordered. Over residues aspartate 15–arginine 25 the composition is skewed to acidic residues. 3 stretches are compositionally biased toward basic and acidic residues: residues proline 38–aspartate 51, aspartate 73–arginine 84, and lysine 107–aspartate 141.

Belongs to the gas vesicle GvpH family. In terms of assembly, gvpF to GvpM interact with each other in vitro, and may form multi-subunit complex(es). Interacts with GvpC. Might interact with GvpA.

It localises to the gas vesicle. Its function is as follows. Proteins GvpF to GvpM might be involved in nucleating gas vesicle formation. A minor component of the gas vesicle. Gas vesicles are hollow, gas filled proteinaceous nanostructures found in some microorganisms. They allow positioning of halobacteria at the optimal depth for growth in the poorly aerated, shallow brine pools of their habitat. Functionally, expression of a 9.5 kb mc-vac DNA fragment containing 2 divergently transcribed regions (gvpD-gvpE-gvpF-gvpG-gvpH-gvpI-gvpJ-gvpK-gvpL-gvpM and gvpA-gvpC-gvpN-gvpO) allows H.volcanii to produce gas vesicles. The polypeptide is Gas vesicle protein H (Haloferax mediterranei (strain ATCC 33500 / DSM 1411 / JCM 8866 / NBRC 14739 / NCIMB 2177 / R-4) (Halobacterium mediterranei)).